Consider the following 27-residue polypeptide: uncharacterized protein (27 aa).

It localises to the plastid. It is found in the chloroplast. This is an uncharacterized protein from Trieres chinensis (Marine centric diatom).